Here is a 440-residue protein sequence, read N- to C-terminus: 23S rRNA (uracil(1939)-C(5))-methyltransferase RlmD (440 aa).

A TRAM domain is found at 6-64 (PIHNAQPEQVFIESLDTEGRGIARVEGKVLFVDGALPGERVWARRTQNHKSFDRAELLQ). 4 residues coordinate [4Fe-4S] cluster: C77, C83, C86, and C164. Residues Q273, F302, N307, E323, D351, and D372 each coordinate S-adenosyl-L-methionine. Residue C397 is the Nucleophile of the active site.

It belongs to the class I-like SAM-binding methyltransferase superfamily. RNA M5U methyltransferase family. RlmD subfamily.

The enzyme catalyses uridine(1939) in 23S rRNA + S-adenosyl-L-methionine = 5-methyluridine(1939) in 23S rRNA + S-adenosyl-L-homocysteine + H(+). Functionally, catalyzes the formation of 5-methyl-uridine at position 1939 (m5U1939) in 23S rRNA. In Acidithiobacillus ferrooxidans (strain ATCC 23270 / DSM 14882 / CIP 104768 / NCIMB 8455) (Ferrobacillus ferrooxidans (strain ATCC 23270)), this protein is 23S rRNA (uracil(1939)-C(5))-methyltransferase RlmD.